Consider the following 399-residue polypeptide: Mycinamicin VI 2''-O-methyltransferase (399 aa).

S-adenosyl-L-methionine-binding positions include Thr173, Glu202 to Tyr208, Ser217, Asp234, Asp252 to Gln253, and Asp275. Asp275 contacts Mg(2+). The active-site Proton acceptor is the His278. Residues Glu303 and Asp304 each coordinate Mg(2+).

The protein belongs to the methyltransferase OleY/MycE family. Homotetramer. Mg(2+) is required as a cofactor.

It carries out the reaction mycinamicin VI + S-adenosyl-L-methionine = mycinamicin III + S-adenosyl-L-homocysteine + H(+). The protein operates within antibiotic biosynthesis; mycinamicin biosynthesis. O-methyltransferase that catalyzes the conversion of mycinamicin VI to mycinamicin III in the biosynthesis of mycinamicin, a 16-membered macrolide antibiotic. In Micromonospora griseorubida, this protein is Mycinamicin VI 2''-O-methyltransferase (mycE).